Reading from the N-terminus, the 522-residue chain is Peptide chain release factor 3 (522 aa).

One can recognise a tr-type G domain in the interval 10–277 (ASRKTFAIIS…TFVDFAPAPS (268 aa)). Residues 19 to 26 (SHPDAGKT), 87 to 91 (DTPGH), and 141 to 144 (NKMD) contribute to the GTP site.

The protein belongs to the TRAFAC class translation factor GTPase superfamily. Classic translation factor GTPase family. PrfC subfamily.

It localises to the cytoplasm. Increases the formation of ribosomal termination complexes and stimulates activities of RF-1 and RF-2. It binds guanine nucleotides and has strong preference for UGA stop codons. It may interact directly with the ribosome. The stimulation of RF-1 and RF-2 is significantly reduced by GTP and GDP, but not by GMP. This chain is Peptide chain release factor 3, found in Listeria welshimeri serovar 6b (strain ATCC 35897 / DSM 20650 / CCUG 15529 / CIP 8149 / NCTC 11857 / SLCC 5334 / V8).